A 72-amino-acid chain; its full sequence is Metallothionein-like protein 1B (72 aa).

It belongs to the metallothionein superfamily. Type 15 family. As to expression, expressed in leaves of mature plants.

Functionally, metallothioneins have a high content of cysteine residues that bind various heavy metals. Functions as a metal chelator of nickel (Ni), cadmium (Cd), zinc (Zn) and copper (Cu). Possesses higher affinity for Ni and Cd ions compared to Zn and Cu ions. This Oryza sativa subsp. japonica (Rice) protein is Metallothionein-like protein 1B (MT1B).